A 593-amino-acid chain; its full sequence is Aspartate--tRNA ligase (593 aa).

Residue Glu180 coordinates L-aspartate. Residues 204 to 207 are aspartate; it reads QIFK. Arg226 is an L-aspartate binding site. Residues 226–228 and Gln235 contribute to the ATP site; that span reads RDE. His453 contributes to the L-aspartate binding site. Position 487 (Glu487) interacts with ATP. An L-aspartate-binding site is contributed by Arg494. 539–542 contributes to the ATP binding site; it reads GLDR.

It belongs to the class-II aminoacyl-tRNA synthetase family. Type 1 subfamily. Homodimer.

It localises to the cytoplasm. The enzyme catalyses tRNA(Asp) + L-aspartate + ATP = L-aspartyl-tRNA(Asp) + AMP + diphosphate. Catalyzes the attachment of L-aspartate to tRNA(Asp) in a two-step reaction: L-aspartate is first activated by ATP to form Asp-AMP and then transferred to the acceptor end of tRNA(Asp). The sequence is that of Aspartate--tRNA ligase from Clostridium botulinum (strain Okra / Type B1).